The following is a 748-amino-acid chain: Transcription factor FBD3 (748 aa).

The segment covering 1–10 (MPEQPRRPSD) has biased composition (basic and acidic residues). The disordered stretch occupies residues 1–26 (MPEQPRRPSDQEQNQSETGPPTNKRR). Polar residues predominate over residues 11-21 (QEQNQSETGPP). Residues 32-59 (CNACRSRKSRCDGQRPSCSSCLSLGFDC) constitute a DNA-binding region (zn(2)-C6 fungal-type). 2 disordered regions span residues 116–160 (GTIN…EGIP) and 417–438 (IPDE…TSGN). Positions 131–141 (APTKASAPSGA) are enriched in low complexity. Positions 429 to 438 (SGRSPATSGN) are enriched in polar residues.

It localises to the nucleus. Transcription factor; part of the Fusarium detoxification of benzoxazolinone cluster 2 (FDB2) involved in the degradation of benzoxazolinones produced by the host plant. Maize, wheat, and rye produce the 2 benzoxazinone phytoanticipins 2,4-dihy-droxy-7-methoxy-1,4-benzoxazin-3-one (DIMBOA) and 2,4-dihydroxy-1,4-benzoxazin-3-one (DIBOA) that, due to their inherent instability once released, spontaneously degrade to the more stable corresponding benzoxazolinones, 6-methoxy-2-benzoxazolinone (MBOA) and 2-benzoxazolinone (BOA), respectively. FDB3 is not essentiel, but contributes to efficient BOA biotransformation. This Gibberella moniliformis (strain M3125 / FGSC 7600) (Maize ear and stalk rot fungus) protein is Transcription factor FBD3.